A 49-amino-acid polypeptide reads, in one-letter code: Large ribosomal subunit protein bL33 (49 aa).

This sequence belongs to the bacterial ribosomal protein bL33 family.

This is Large ribosomal subunit protein bL33 from Finegoldia magna (strain ATCC 29328 / DSM 20472 / WAL 2508) (Peptostreptococcus magnus).